We begin with the raw amino-acid sequence, 204 residues long: Ribosomal RNA large subunit methyltransferase E (204 aa).

Residues Gly49, Trp51, Asp69, Asn87, and Asp111 each coordinate S-adenosyl-L-methionine. The active-site Proton acceptor is Lys151.

The protein belongs to the class I-like SAM-binding methyltransferase superfamily. RNA methyltransferase RlmE family.

The protein localises to the cytoplasm. The catalysed reaction is uridine(2552) in 23S rRNA + S-adenosyl-L-methionine = 2'-O-methyluridine(2552) in 23S rRNA + S-adenosyl-L-homocysteine + H(+). Functionally, specifically methylates the uridine in position 2552 of 23S rRNA at the 2'-O position of the ribose in the fully assembled 50S ribosomal subunit. This Nitratidesulfovibrio vulgaris (strain ATCC 29579 / DSM 644 / CCUG 34227 / NCIMB 8303 / VKM B-1760 / Hildenborough) (Desulfovibrio vulgaris) protein is Ribosomal RNA large subunit methyltransferase E.